The primary structure comprises 146 residues: MTIKLHDLKPARGSKTPRTRVGRGEGSKGKTAGRGTKGTKARKNVPVTFEGGQMPIHMRLPKLKGFRNRFRTEYEIVNVGDINRLFPQGGSVGVDELVAKGAVRRNSLVKVLGDGKLTVKVEVSAHKFSGSAREKITAAGGSVTEL.

The span at 1-10 (MTIKLHDLKP) shows a compositional bias: basic and acidic residues. Positions 1–52 (MTIKLHDLKPARGSKTPRTRVGRGEGSKGKTAGRGTKGTKARKNVPVTFEGG) are disordered.

This sequence belongs to the universal ribosomal protein uL15 family. As to quaternary structure, part of the 50S ribosomal subunit.

Binds to the 23S rRNA. The polypeptide is Large ribosomal subunit protein uL15 (Mycolicibacterium paratuberculosis (strain ATCC BAA-968 / K-10) (Mycobacterium paratuberculosis)).